A 378-amino-acid polypeptide reads, in one-letter code: Probable tRNA sulfurtransferase (378 aa).

One can recognise a THUMP domain in the interval D51–T153. ATP-binding positions include L171–M172, S196–F197, R253, G275, and Q284.

It belongs to the ThiI family.

Its subcellular location is the cytoplasm. The enzyme catalyses [ThiI sulfur-carrier protein]-S-sulfanyl-L-cysteine + a uridine in tRNA + 2 reduced [2Fe-2S]-[ferredoxin] + ATP + H(+) = [ThiI sulfur-carrier protein]-L-cysteine + a 4-thiouridine in tRNA + 2 oxidized [2Fe-2S]-[ferredoxin] + AMP + diphosphate. The catalysed reaction is [ThiS sulfur-carrier protein]-C-terminal Gly-Gly-AMP + S-sulfanyl-L-cysteinyl-[cysteine desulfurase] + AH2 = [ThiS sulfur-carrier protein]-C-terminal-Gly-aminoethanethioate + L-cysteinyl-[cysteine desulfurase] + A + AMP + 2 H(+). It functions in the pathway cofactor biosynthesis; thiamine diphosphate biosynthesis. Catalyzes the ATP-dependent transfer of a sulfur to tRNA to produce 4-thiouridine in position 8 of tRNAs, which functions as a near-UV photosensor. Also catalyzes the transfer of sulfur to the sulfur carrier protein ThiS, forming ThiS-thiocarboxylate. This is a step in the synthesis of thiazole, in the thiamine biosynthesis pathway. The sulfur is donated as persulfide by IscS. This chain is Probable tRNA sulfurtransferase, found in Mycoplasmopsis agalactiae (strain NCTC 10123 / CIP 59.7 / PG2) (Mycoplasma agalactiae).